Here is a 455-residue protein sequence, read N- to C-terminus: Bifunctional protein GlmU (455 aa).

The segment at 1–226 (MSLDIVILAA…AMEVQGANDR (226 aa)) is pyrophosphorylase. UDP-N-acetyl-alpha-D-glucosamine contacts are provided by residues 8-11 (LAAG), lysine 22, glutamine 73, 78-79 (GT), 99-101 (YGD), glycine 136, glutamate 151, asparagine 166, and asparagine 224. Aspartate 101 contributes to the Mg(2+) binding site. Position 224 (asparagine 224) interacts with Mg(2+). A linker region spans residues 227 to 247 (RQLSELERHYQLREGRRLMAQ). The interval 248 to 455 (GVTLRDPARF…WKRPEKIKKS (208 aa)) is N-acetyltransferase. UDP-N-acetyl-alpha-D-glucosamine is bound by residues arginine 330 and lysine 348. Histidine 360 functions as the Proton acceptor in the catalytic mechanism. UDP-N-acetyl-alpha-D-glucosamine-binding residues include tyrosine 363 and asparagine 374. Acetyl-CoA-binding positions include alanine 377, 383–384 (NY), serine 402, alanine 420, and arginine 437.

In the N-terminal section; belongs to the N-acetylglucosamine-1-phosphate uridyltransferase family. The protein in the C-terminal section; belongs to the transferase hexapeptide repeat family. In terms of assembly, homotrimer. The cofactor is Mg(2+).

Its subcellular location is the cytoplasm. It catalyses the reaction alpha-D-glucosamine 1-phosphate + acetyl-CoA = N-acetyl-alpha-D-glucosamine 1-phosphate + CoA + H(+). It carries out the reaction N-acetyl-alpha-D-glucosamine 1-phosphate + UTP + H(+) = UDP-N-acetyl-alpha-D-glucosamine + diphosphate. It participates in nucleotide-sugar biosynthesis; UDP-N-acetyl-alpha-D-glucosamine biosynthesis; N-acetyl-alpha-D-glucosamine 1-phosphate from alpha-D-glucosamine 6-phosphate (route II): step 2/2. It functions in the pathway nucleotide-sugar biosynthesis; UDP-N-acetyl-alpha-D-glucosamine biosynthesis; UDP-N-acetyl-alpha-D-glucosamine from N-acetyl-alpha-D-glucosamine 1-phosphate: step 1/1. Its pathway is bacterial outer membrane biogenesis; LPS lipid A biosynthesis. Catalyzes the last two sequential reactions in the de novo biosynthetic pathway for UDP-N-acetylglucosamine (UDP-GlcNAc). The C-terminal domain catalyzes the transfer of acetyl group from acetyl coenzyme A to glucosamine-1-phosphate (GlcN-1-P) to produce N-acetylglucosamine-1-phosphate (GlcNAc-1-P), which is converted into UDP-GlcNAc by the transfer of uridine 5-monophosphate (from uridine 5-triphosphate), a reaction catalyzed by the N-terminal domain. The chain is Bifunctional protein GlmU from Pseudomonas putida (strain ATCC 700007 / DSM 6899 / JCM 31910 / BCRC 17059 / LMG 24140 / F1).